The following is a 179-amino-acid chain: O-acetyl-ADP-ribose deacetylase (179 aa).

The Macro domain occupies 1–175 (MTSRLQVIQG…LYARLLTQQG (175 aa)). Residues 11–12 (DI), asparagine 25, 33–35 (GVD), and 122–126 (STGVY) contribute to the substrate site. Residue aspartate 35 is the Proton acceptor of the active site.

It belongs to the MacroD-type family. YmdB subfamily. Homodimer. Interacts with RNase III.

It carries out the reaction 3''-O-acetyl-ADP-D-ribose + H2O = ADP-D-ribose + acetate + H(+). The enzyme catalyses 2''-O-acetyl-ADP-D-ribose + H2O = ADP-D-ribose + acetate + H(+). Functionally, deacetylates O-acetyl-ADP ribose to yield ADP-ribose and free acetate. Down-regulates ribonuclease 3 (RNase III) activity. Acts by interacting directly with the region of the ribonuclease that is required for dimerization/activation. The sequence is that of O-acetyl-ADP-ribose deacetylase from Salmonella typhi.